We begin with the raw amino-acid sequence, 152 residues long: Cytochrome c-type biogenesis CcmH-like mitochondrial protein (152 aa).

Over 1–83 the chain is Mitochondrial intermembrane; the sequence is MATEEDVKQR…ILYTPKFDLQ (83 aa). Cysteine 26 and cysteine 29 together coordinate heme. A helical membrane pass occupies residues 84-104; that stretch reads TAAIWLSPVIVGGVAAGVWAY. Residues 105 to 152 are Mitochondrial matrix-facing; sequence KKHRQRTNVHIMALNLVRGVPLTPREKETMLDVLTPPPPANKWWWPGK.

The protein belongs to the CcmH/CycL/Ccl2/NrfF family.

It localises to the mitochondrion inner membrane. Plays a role in mitochondrial cytochrome c maturation. Probable component of a heme lyase complex involved in the reduction of apocytochrome c. The polypeptide is Cytochrome c-type biogenesis CcmH-like mitochondrial protein (Oryza sativa subsp. indica (Rice)).